Reading from the N-terminus, the 336-residue chain is MKIAIVNDMPLAVEALRRALAFEPAHQVVWVASNGAEAVRLCAENTPDLILMDLIMPVMDGVEATRRIMAESPCAIVIVTVDRQQNVHRVFEAMGHGALDVVDTPAIGGGNPQEAAAPLLRKILNIGWLIGEKTARSRPAPAAPRSTASRQRLVAIGSSAGGPAALEVLLKGLPRHFSAAIVLVQHVDQVFAAGMAEWLASASGLDVRLAREGEPPQAGAVLLAGTNHHIRLLKNGTLAYTAEPVNEIYRPSIDVFFESVANYWNGDAVGVLLTGMGRDGAQGLKLMRQQGYLTIAQDQQSSAVYGMPKAAAAIDAAVEIRPLEKIAPRLLEIFPK.

Residues 2 to 119 enclose the Response regulatory domain; that stretch reads KIAIVNDMPL…GNPQEAAAPL (118 aa). Residue D53 is modified to 4-aspartylphosphate. In terms of domain architecture, CheB-type methylesterase spans 147 to 336; that stretch reads TASRQRLVAI…APRLLEIFPK (190 aa). Active-site residues include S159, H186, and D279.

The protein belongs to the CheB family. In terms of processing, phosphorylated by CheA. Phosphorylation of the N-terminal regulatory domain activates the methylesterase activity.

It localises to the cytoplasm. It catalyses the reaction [protein]-L-glutamate 5-O-methyl ester + H2O = L-glutamyl-[protein] + methanol + H(+). It carries out the reaction L-glutaminyl-[protein] + H2O = L-glutamyl-[protein] + NH4(+). Involved in chemotaxis. Part of a chemotaxis signal transduction system that modulates chemotaxis in response to various stimuli. Catalyzes the demethylation of specific methylglutamate residues introduced into the chemoreceptors (methyl-accepting chemotaxis proteins or MCP) by CheR. Also mediates the irreversible deamidation of specific glutamine residues to glutamic acid. This chain is Protein-glutamate methylesterase/protein-glutamine glutaminase 1, found in Pseudomonas fluorescens (strain Pf0-1).